The sequence spans 277 residues: Shikimate dehydrogenase (NADP(+)) (277 aa).

Shikimate is bound by residues 15–17 (SLS) and Thr62. The active-site Proton acceptor is Lys66. 2 residues coordinate shikimate: Asn87 and Asp102. Residues 127–131 (GAGGA), 151–156 (NRTVSK), and Ile219 each bind NADP(+). Tyr221 is a shikimate binding site. Residue Gly242 participates in NADP(+) binding.

Belongs to the shikimate dehydrogenase family. As to quaternary structure, homodimer.

The enzyme catalyses shikimate + NADP(+) = 3-dehydroshikimate + NADPH + H(+). It participates in metabolic intermediate biosynthesis; chorismate biosynthesis; chorismate from D-erythrose 4-phosphate and phosphoenolpyruvate: step 4/7. Its function is as follows. Involved in the biosynthesis of the chorismate, which leads to the biosynthesis of aromatic amino acids. Catalyzes the reversible NADPH linked reduction of 3-dehydroshikimate (DHSA) to yield shikimate (SA). This chain is Shikimate dehydrogenase (NADP(+)), found in Geobacillus sp. (strain WCH70).